We begin with the raw amino-acid sequence, 610 residues long: DNA mismatch repair protein MutL (610 aa).

This sequence belongs to the DNA mismatch repair MutL/HexB family.

In terms of biological role, this protein is involved in the repair of mismatches in DNA. It is required for dam-dependent methyl-directed DNA mismatch repair. May act as a 'molecular matchmaker', a protein that promotes the formation of a stable complex between two or more DNA-binding proteins in an ATP-dependent manner without itself being part of a final effector complex. This is DNA mismatch repair protein MutL from Rickettsia peacockii (strain Rustic).